We begin with the raw amino-acid sequence, 359 residues long: Phospho-N-acetylmuramoyl-pentapeptide-transferase (359 aa).

The next 10 helical transmembrane spans lie at 3 to 23, 55 to 75, 80 to 100, 117 to 137, 156 to 176, 187 to 207, 231 to 251, 255 to 275, 280 to 300, and 334 to 354; these read QIMIAVAIAVAVSILLTPALI, VAILAGIWAGYFGTHLAGLAF, ITASGLLVLGLATSLGGVGFL, TAKTVGQITSAVLFAVLVLQF, IATVTLTPALFVLFCVLVVSA, LDGLAAGCMAMVTGAYVLITF, LALIAAATAGACIGFLWWNAA, IFMGDTGSLALGGIIAGLSVT, ILAVVLGALFVAEITSVVLQI, and FWLLTAITCGLGVALFYGEWL.

It belongs to the glycosyltransferase 4 family. MraY subfamily. Mg(2+) serves as cofactor.

It is found in the cell membrane. The enzyme catalyses UDP-N-acetyl-alpha-D-muramoyl-L-alanyl-gamma-D-glutamyl-meso-2,6-diaminopimeloyl-D-alanyl-D-alanine + di-trans,octa-cis-undecaprenyl phosphate = di-trans,octa-cis-undecaprenyl diphospho-N-acetyl-alpha-D-muramoyl-L-alanyl-D-glutamyl-meso-2,6-diaminopimeloyl-D-alanyl-D-alanine + UMP. Its pathway is cell wall biogenesis; peptidoglycan biosynthesis. Catalyzes the initial step of the lipid cycle reactions in the biosynthesis of the cell wall peptidoglycan: transfers peptidoglycan precursor phospho-MurNAc-pentapeptide from UDP-MurNAc-pentapeptide onto the lipid carrier undecaprenyl phosphate, yielding undecaprenyl-pyrophosphoryl-MurNAc-pentapeptide, known as lipid I. This chain is Phospho-N-acetylmuramoyl-pentapeptide-transferase, found in Mycobacterium ulcerans (strain Agy99).